The following is a 54-amino-acid chain: uncharacterized protein (54 aa).

The disordered stretch occupies residues 34–54 (NNREKQKSGKLRELRRGFKTF).

This is an uncharacterized protein from Acidianus two-tailed virus (ATV).